The primary structure comprises 234 residues: Demethylmenaquinone methyltransferase (234 aa).

S-adenosyl-L-methionine is bound by residues T58, D79, and 106–107 (NA).

Belongs to the class I-like SAM-binding methyltransferase superfamily. MenG/UbiE family.

The catalysed reaction is a 2-demethylmenaquinol + S-adenosyl-L-methionine = a menaquinol + S-adenosyl-L-homocysteine + H(+). It functions in the pathway quinol/quinone metabolism; menaquinone biosynthesis; menaquinol from 1,4-dihydroxy-2-naphthoate: step 2/2. In terms of biological role, methyltransferase required for the conversion of demethylmenaquinol (DMKH2) to menaquinol (MKH2). In Geobacillus kaustophilus (strain HTA426), this protein is Demethylmenaquinone methyltransferase.